Reading from the N-terminus, the 118-residue chain is NADH-quinone oxidoreductase subunit A (118 aa).

Helical transmembrane passes span 8–28 (IGIFLVAAISFPLIPLVLAFF), 64–84 (ALAFVIFDIEVIFLYPWAVAF), and 87–107 (VGLYGLIAATIFLLMLFAGLL).

Belongs to the complex I subunit 3 family. As to quaternary structure, NDH-1 is composed of 14 different subunits. Subunits NuoA, H, J, K, L, M, N constitute the membrane sector of the complex.

It localises to the cell membrane. The catalysed reaction is a quinone + NADH + 5 H(+)(in) = a quinol + NAD(+) + 4 H(+)(out). NDH-1 shuttles electrons from NADH, via FMN and iron-sulfur (Fe-S) centers, to quinones in the respiratory chain. The immediate electron acceptor for the enzyme in this species is believed to be ubiquinone. Couples the redox reaction to proton translocation (for every two electrons transferred, four hydrogen ions are translocated across the cytoplasmic membrane), and thus conserves the redox energy in a proton gradient. The sequence is that of NADH-quinone oxidoreductase subunit A from Chloroflexus aurantiacus (strain ATCC 29366 / DSM 635 / J-10-fl).